The chain runs to 194 residues: MSAITITDAAHDYLADLLSKQNTPGIGIRIFITQPGTQYAETCIAYCKPGEEKPDDTAVGLKSFTAYLDAVSVPFLEDALVDYATDRMGGQLTIKAPNAKVPMVNEDSPINERINYYLQTEINPGLASHGGQVSLVDVVDDGIAVLQFGGGCQGCGQADVTLKEGIERTLLERIPELKGVRDVTDHSQKENAYY.

The [4Fe-4S] cluster site is built by C152 and C155.

The protein belongs to the NfuA family. As to quaternary structure, homodimer. [4Fe-4S] cluster serves as cofactor.

Involved in iron-sulfur cluster biogenesis. Binds a 4Fe-4S cluster, can transfer this cluster to apoproteins, and thereby intervenes in the maturation of Fe/S proteins. Could also act as a scaffold/chaperone for damaged Fe/S proteins. This is Fe/S biogenesis protein NfuA from Pseudomonas putida (strain ATCC 700007 / DSM 6899 / JCM 31910 / BCRC 17059 / LMG 24140 / F1).